Here is a 177-residue protein sequence, read N- to C-terminus: Late embryogenesis abundant protein 1 (177 aa).

The disordered stretch occupies residues 1–177; sequence MASHDQSYKA…DKDHFPTNRH (177 aa). The segment covering 28–39 has biased composition (basic and acidic residues); the sequence is IEDKAQAAKEKA. Low complexity predominate over residues 40–89; it reads QQAAQTAKDKTSQTAQAAKEKTQQTAQAAKEKTQQTAQAAKDETQQTAQA. Repeat copies occupy residues 53-63, 64-74, 75-85, and 86-96. The tract at residues 53–96 is 4 X 11 AA approximate tandem repeats of T-A-Q-A-A-K-E-K-T-Q-Q; the sequence is TAQAAKEKTQQTAQAAKEKTQQTAQAAKDETQQTAQAAKDKTQQ. A compositionally biased stretch (basic and acidic residues) spans 90–117; it reads AKDKTQQTTEATKEKAQDTTGRAREKGS. Positions 119–142 are enriched in polar residues; it reads MGQSTKETAQSGKDNSAGFLQQTG. A compositionally biased stretch (basic and acidic residues) spans 164–177; that stretch reads NDDKDKDHFPTNRH.

This sequence belongs to the LEA type 4 family. In terms of tissue distribution, highest expression is found in seeds. No expression detected in adult tissues.

The sequence is that of Late embryogenesis abundant protein 1 from Cicer arietinum (Chickpea).